We begin with the raw amino-acid sequence, 289 residues long: Shikimate dehydrogenase (NADP(+)) (289 aa).

Shikimate-binding positions include 20 to 22 and Ser-67; that span reads SIS. Lys-71 (proton acceptor) is an active-site residue. 2 residues coordinate shikimate: Asn-92 and Asp-107. NADP(+) is bound by residues 132–136 and Val-230; that span reads GGGGA. Residue Tyr-232 participates in shikimate binding. Residue Gly-253 participates in NADP(+) binding.

The protein belongs to the shikimate dehydrogenase family. Homodimer.

It catalyses the reaction shikimate + NADP(+) = 3-dehydroshikimate + NADPH + H(+). The protein operates within metabolic intermediate biosynthesis; chorismate biosynthesis; chorismate from D-erythrose 4-phosphate and phosphoenolpyruvate: step 4/7. Functionally, involved in the biosynthesis of the chorismate, which leads to the biosynthesis of aromatic amino acids. Catalyzes the reversible NADPH linked reduction of 3-dehydroshikimate (DHSA) to yield shikimate (SA). In Streptococcus mutans serotype c (strain ATCC 700610 / UA159), this protein is Shikimate dehydrogenase (NADP(+)).